The primary structure comprises 309 residues: Fructosamine-3-kinase (309 aa).

Met-1 carries the N-acetylmethionine modification. Residue 89–91 (EHL) coordinates ATP. Asp-217 (proton acceptor) is an active-site residue.

It belongs to the fructosamine kinase family. As to quaternary structure, monomer. In terms of tissue distribution, widely expressed. Expressed in erythrocytes.

It carries out the reaction N(6)-(D-fructosyl)-L-lysyl-[protein] + ATP = N(6)-(3-O-phospho-D-fructosyl)-L-lysyl-[protein] + ADP + H(+). The catalysed reaction is N(6)-D-ribulosyl-L-lysyl-[protein] + ATP = N(6)-(3-O-phospho-D-ribulosyl)-L-lysyl-[protein] + ADP + H(+). The enzyme catalyses N(6)-(D-psicosyl)-L-lysyl-[protein] + ATP = N(6)-(3-O-phospho-D-psicosyl)-L-lysyl-[protein] + ADP + H(+). Fructosamine-3-kinase involved in protein deglycation by mediating phosphorylation of fructoselysine residues on glycated proteins, to generate fructoselysine-3 phosphate. Fructoselysine-3 phosphate adducts are unstable and decompose under physiological conditions. Involved in intracellular deglycation in erythrocytes. Involved in the response to oxidative stress by mediating deglycation of NFE2L2/NRF2, glycation impairing NFE2L2/NRF2 function. Also able to phosphorylate psicosamines and ribulosamines. This is Fructosamine-3-kinase from Homo sapiens (Human).